A 130-amino-acid chain; its full sequence is Glycine cleavage system H protein (130 aa).

One can recognise a Lipoyl-binding domain in the interval 24 to 106 (TFTVGITDHA…YGDGWLYRIT (83 aa)). The residue at position 65 (lysine 65) is an N6-lipoyllysine.

Belongs to the GcvH family. In terms of assembly, the glycine cleavage system is composed of four proteins: P, T, L and H. It depends on (R)-lipoate as a cofactor.

In terms of biological role, the glycine cleavage system catalyzes the degradation of glycine. The H protein shuttles the methylamine group of glycine from the P protein to the T protein. This is Glycine cleavage system H protein from Coxiella burnetii (strain CbuK_Q154) (Coxiella burnetii (strain Q154)).